The chain runs to 129 residues: Small ribosomal subunit protein uS11 (129 aa).

It belongs to the universal ribosomal protein uS11 family. In terms of assembly, part of the 30S ribosomal subunit. Interacts with proteins S7 and S18. Binds to IF-3.

Its function is as follows. Located on the platform of the 30S subunit, it bridges several disparate RNA helices of the 16S rRNA. Forms part of the Shine-Dalgarno cleft in the 70S ribosome. The protein is Small ribosomal subunit protein uS11 of Sodalis glossinidius (strain morsitans).